The following is an 80-amino-acid chain: Metallothionein-like protein type 2 (80 aa).

Belongs to the metallothionein superfamily. Type 15 family.

Metallothioneins have a high content of cysteine residues that bind various heavy metals. In Ricinus communis (Castor bean), this protein is Metallothionein-like protein type 2 (MTI).